The following is a 119-amino-acid chain: Circadian clock oscillator protein KaiB (119 aa).

This sequence belongs to the KaiB family. As to quaternary structure, may undergo a major conformational rearrangment; in the free state forms homooligomers. When bound to KaiC switches to a monomeric thioredoxin-fold (KaiB(fs)). The active oscillator complex is probably KaiC(6):KaiB(6).

Component of the KaiBC clock protein complex, which constitutes the main circadian regulator in cyanobacteria; it may modify the ATPase activity of KaiC. Its function is as follows. May be a metamorphic protein which reversibly switches between an inactive tetrameric fold and a rare, thioredoxin-like monomeric fold (KaiB(fs)). KaiB(fs) binds phospho-KaiC, and perhaps clock output effectors. This is Circadian clock oscillator protein KaiB from Prochlorococcus marinus (strain MIT 9303).